The chain runs to 434 residues: [Arg8]-vasotocin receptor (434 aa).

Residues 1–27 lie on the Extracellular side of the membrane; the sequence is MGRIANQTTASNDTDPFGRNEEVAKME. 2 N-linked (GlcNAc...) asparagine glycosylation sites follow: Asn-6 and Asn-12. Residues 28 to 48 form a helical membrane-spanning segment; sequence ITVLSVTFFVAVIGNLSVLLA. Residues 49–67 lie on the Cytoplasmic side of the membrane; sequence MHNTKKKSSRMHLFIKHLS. A helical transmembrane segment spans residues 68–88; it reads LADMVVAFFQVLPQLCWEITF. Residues 89–98 lie on the Extracellular side of the membrane; that stretch reads RFYGPDFLCR. Cys-97 and Cys-176 are oxidised to a cystine. A helical transmembrane segment spans residues 99–119; the sequence is IVKHLQVLGMFASTYMMVMMT. The Cytoplasmic portion of the chain corresponds to 120 to 141; that stretch reads LDRYIAICHPLKTLQQPTQRAY. A helical transmembrane segment spans residues 142–162; it reads IMIGSTWLCSLLLSTPQYFIF. Topologically, residues 163-191 are extracellular; sequence SLSEIQNGSYVYDCWGHFIEPWGIRAYIT. Residues 192–212 form a helical membrane-spanning segment; sequence WITVGIFLIPVIILMICYGFI. Topologically, residues 213–257 are cytoplasmic; sequence CHSIWKNIKCKTMRGTRNTKDGMIGKVSVSSVTIISRAKLRTVKM. Residues 258–278 traverse the membrane as a helical segment; sequence TLVIVLAYIVCWAPFFIVQMW. Residues 279–295 are Extracellular-facing; the sequence is SVWDENFSWDDSENAAV. A helical transmembrane segment spans residues 296–316; the sequence is TLSALLASLNSCCNPWIYMLF. The Cytoplasmic portion of the chain corresponds to 317 to 434; the sequence is SGHLLYDFLR…KSSQCMSKES (118 aa).

This sequence belongs to the G-protein coupled receptor 1 family. Vasopressin/oxytocin receptor subfamily. In terms of tissue distribution, expressed in pituitary, liver, gills, swim bladder and lateral line.

The protein resides in the cell membrane. Binds to vasotocin. Produces an induction of membrane chloride currents indicating that it is coupled to the inositol phosphate/calcium pathway. In Catostomus commersonii (White sucker), this protein is [Arg8]-vasotocin receptor.